A 205-amino-acid polypeptide reads, in one-letter code: Methylamine utilization protein MauD (205 aa).

Residues 5 to 25 (FLIASNVLLWLALIGCAVLML) traverse the membrane as a helical segment. A Thioredoxin domain is found at 50-184 (PDVGDAAPTF…LESLLEADKS (135 aa)).

Its subcellular location is the membrane. It functions in the pathway one-carbon metabolism; methylamine degradation. Functionally, may be specifically involved in the processing, transport, and/or maturation of the MADH beta-subunit. The sequence is that of Methylamine utilization protein MauD (mauD) from Methylorubrum extorquens (strain ATCC 14718 / DSM 1338 / JCM 2805 / NCIMB 9133 / AM1) (Methylobacterium extorquens).